A 132-amino-acid polypeptide reads, in one-letter code: NAD(P)H-quinone oxidoreductase subunit 3 (132 aa).

3 helical membrane passes run 22-42, 76-96, and 101-121; these read FLGF…ASAL, MFAL…PWAV, and LGLL…VALV.

This sequence belongs to the complex I subunit 3 family. NDH-1 can be composed of about 15 different subunits; different subcomplexes with different compositions have been identified which probably have different functions.

The protein localises to the cellular thylakoid membrane. The catalysed reaction is a plastoquinone + NADH + (n+1) H(+)(in) = a plastoquinol + NAD(+) + n H(+)(out). The enzyme catalyses a plastoquinone + NADPH + (n+1) H(+)(in) = a plastoquinol + NADP(+) + n H(+)(out). In terms of biological role, NDH-1 shuttles electrons from an unknown electron donor, via FMN and iron-sulfur (Fe-S) centers, to quinones in the respiratory and/or the photosynthetic chain. The immediate electron acceptor for the enzyme in this species is believed to be plastoquinone. Couples the redox reaction to proton translocation, and thus conserves the redox energy in a proton gradient. Cyanobacterial NDH-1 also plays a role in inorganic carbon-concentration. In Thermosynechococcus vestitus (strain NIES-2133 / IAM M-273 / BP-1), this protein is NAD(P)H-quinone oxidoreductase subunit 3 (ndhC).